Reading from the N-terminus, the 205-residue chain is Histidine biosynthesis bifunctional protein HisIE (205 aa).

The segment at 1–115 (MIDIKELKFD…DEETEDGIEI (115 aa)) is phosphoribosyl-AMP cyclohydrolase. Residues 116–205 (LNKLYERIKG…YNELERRYKK (90 aa)) form a phosphoribosyl-ATP pyrophosphohydrolase region.

This sequence in the N-terminal section; belongs to the PRA-CH family. The protein in the C-terminal section; belongs to the PRA-PH family.

The protein localises to the cytoplasm. It carries out the reaction 1-(5-phospho-beta-D-ribosyl)-ATP + H2O = 1-(5-phospho-beta-D-ribosyl)-5'-AMP + diphosphate + H(+). The enzyme catalyses 1-(5-phospho-beta-D-ribosyl)-5'-AMP + H2O = 1-(5-phospho-beta-D-ribosyl)-5-[(5-phospho-beta-D-ribosylamino)methylideneamino]imidazole-4-carboxamide. It functions in the pathway amino-acid biosynthesis; L-histidine biosynthesis; L-histidine from 5-phospho-alpha-D-ribose 1-diphosphate: step 2/9. The protein operates within amino-acid biosynthesis; L-histidine biosynthesis; L-histidine from 5-phospho-alpha-D-ribose 1-diphosphate: step 3/9. The sequence is that of Histidine biosynthesis bifunctional protein HisIE from Caldanaerobacter subterraneus subsp. tengcongensis (strain DSM 15242 / JCM 11007 / NBRC 100824 / MB4) (Thermoanaerobacter tengcongensis).